Consider the following 203-residue polypeptide: Ras-related protein Rab-24 (203 aa).

Tyrosine 17 bears the Phosphotyrosine mark. GTP is bound by residues glycine 19, lysine 20, threonine 21, and threonine 40. Mg(2+) is bound by residues threonine 21, threonine 40, and aspartate 63. Residues 30 to 45 are switch I; sequence DRFLVGPYQNTIGAAF. The tract at residues 63 to 80 is switch II; the sequence is DTAGSERYEAMSRIYYRG. 4 residues coordinate GTP: glycine 66, lysine 121, aspartate 123, and lysine 156. Residue tyrosine 172 is modified to Phosphotyrosine. Residues cysteine 200 and cysteine 201 are each lipidated (S-geranylgeranyl cysteine).

This sequence belongs to the small GTPase superfamily. Rab family. As to quaternary structure, interacts with ZFYVE20. Does not interact with the GDP dissociation inhibitors ARHGDIA and ARHGDIB. Mg(2+) serves as cofactor. Post-translationally, prenylated; prenylation is required for RAB24 localization to autophagosomes. Isoprenylation is inefficient compared to other Rab family members. Phosphorylated at Tyr-17 and Tyr-172. Cytosolic pool of RAB24 is more phosphorylated than the membrane-associated pool. In terms of tissue distribution, widely expressed, with highest expression in brain.

The protein localises to the cytoplasm. It is found in the cytosol. The protein resides in the membrane. It localises to the cytoplasmic vesicle. Its subcellular location is the autophagosome membrane. The protein localises to the perinuclear region. It is found in the cytoskeleton. The protein resides in the spindle. The catalysed reaction is GTP + H2O = GDP + phosphate + H(+). With respect to regulation, regulated by guanine nucleotide exchange factors (GEFs) which promote the exchange of bound GDP for free GTP. Regulated by GTPase activating proteins (GAPs) which increase the GTP hydrolysis activity. Inhibited by GDP dissociation inhibitors (GDIs). In terms of biological role, the small GTPases Rab are key regulators of intracellular membrane trafficking, from the formation of transport vesicles to their fusion with membranes. Rabs cycle between an inactive GDP-bound form and an active GTP-bound form that is able to recruit to membranes different sets of downstream effectors directly responsible for vesicle formation, movement, tethering and fusion. RAB24 is an atypical RAB protein that presents low GTPase activity and thereby exists predominantly in the GTP-bound active state. RAB24 is required for the clearance of late autophagic vacuoles under basal conditions. It is not needed for starvation-induced autophagy. Involved in the modulation of meiotic apparatus assembly and meiotic progression during oocyte maturation, possibly through regulation of kinetochore-microtubule interaction. The sequence is that of Ras-related protein Rab-24 from Mus musculus (Mouse).